We begin with the raw amino-acid sequence, 162 residues long: uncharacterized protein (162 aa).

4 consecutive transmembrane segments (helical) span residues 10-30 (ILSF…MLIL), 50-70 (IVEL…ALYN), 96-116 (IAQY…IILL), and 125-145 (FTAI…LFIF).

Its subcellular location is the cell membrane. This is an uncharacterized protein from Methanocaldococcus jannaschii (strain ATCC 43067 / DSM 2661 / JAL-1 / JCM 10045 / NBRC 100440) (Methanococcus jannaschii).